A 305-amino-acid chain; its full sequence is Probable cell division protein WhiA (305 aa).

Residues 269–302 constitute a DNA-binding region (H-T-H motif); it reads TIKELGELLEPSLGKSGVNHRLRKLVEQANELRK.

Belongs to the WhiA family.

In terms of biological role, involved in cell division and chromosome segregation. In Lactococcus lactis subsp. lactis (strain IL1403) (Streptococcus lactis), this protein is Probable cell division protein WhiA.